Here is an 847-residue protein sequence, read N- to C-terminus: Matrin-3 (847 aa).

An N-acetylserine modification is found at S2. K3 carries the N6-acetyllysine; alternate modification. K3 participates in a covalent cross-link: Glycyl lysine isopeptide (Lys-Gly) (interchain with G-Cter in SUMO2); alternate. Residues S4, S9, S11, S14, S22, S41, S118, and S126 each carry the phosphoserine modification. Residues K132 and K146 each participate in a glycyl lysine isopeptide (Lys-Gly) (interchain with G-Cter in SUMO2) cross-link. Disordered stretches follow at residues 146–174 (KRRR…YRVP) and 187–214 (DSFD…SGYY). Position 150 is a phosphothreonine (T150). A Phosphoserine modification is found at S157. Y158 carries the post-translational modification Phosphotyrosine. Basic and acidic residues predominate over residues 160–174 (RDGRSATREPPYRVP). Phosphoserine is present on residues S164, S188, and S195. Positions 201–214 (DYDHGSRSQESGYY) are enriched in basic and acidic residues. Y202 is subject to Phosphotyrosine. Phosphoserine is present on residues S206, S208, and S211. A Phosphotyrosine modification is found at Y219. Phosphoserine is present on S234. K245 participates in a covalent cross-link: Glycyl lysine isopeptide (Lys-Gly) (interchain with G-Cter in SUMO2). The residue at position 264 (S264) is a Phosphoserine. K269 is covalently cross-linked (Glycyl lysine isopeptide (Lys-Gly) (interchain with G-Cter in SUMO2)). The residue at position 275 (S275) is a Phosphoserine. The interval 342–394 (PFMLQQSTNPAPGILGPPPPSFHLGGPAVGPRGNLGAGNGNLQGPRHMQKGRV) is disordered. In terms of domain architecture, RRM 1 spans 398–473 (RVVHIMDFQR…KPVRVHLSQK (76 aa)). Residues K478, K487, and K491 each participate in a glycyl lysine isopeptide (Lys-Gly) (interchain with G-Cter in SUMO2) cross-link. The RRM 2 domain maps to 496–571 (RVIHLSNLPH…RCVKVDLSEK (76 aa)). Residues S509 and S511 each carry the phosphoserine modification. K515 is covalently cross-linked (Glycyl lysine isopeptide (Lys-Gly) (interchain with G-Cter in SUMO2)). Position 522 is an N6-acetyllysine; alternate (K522). K522 participates in a covalent cross-link: Glycyl lysine isopeptide (Lys-Gly) (interchain with G-Cter in SUMO2); alternate. S533 bears the Phosphoserine mark. Glycyl lysine isopeptide (Lys-Gly) (interchain with G-Cter in SUMO2) cross-links involve residues K554 and K555. Residue K571 is modified to N6-acetyllysine. Residues 588 to 786 (KKDKSRKRSY…DEYRIGPYQP (199 aa)) are disordered. Residues S596, S598, S604, and S606 each carry the phosphoserine modification. The span at 600 to 643 (DGKESPSDKKSKTDGSQKTESSTEGKEQEEKSGEDGEKDTKDDQ) shows a compositional bias: basic and acidic residues. Residues K617 and K630 each participate in a glycyl lysine isopeptide (Lys-Gly) (interchain with G-Cter in SUMO2) cross-link. Positions 653–665 (ESEDELLVDEEEA) are enriched in acidic residues. A phosphoserine mark is found at S654, S671, S673, and S674. Low complexity predominate over residues 666–676 (AALLESGSSVG). T679 carries the post-translational modification Phosphothreonine. Phosphoserine is present on S689. The span at 689–704 (SDGKKEPSDKAVKKDG) shows a compositional bias: basic and acidic residues. Positions 710 to 718 (AKKKLKKVD) match the Nuclear localization signal motif. Glycyl lysine isopeptide (Lys-Gly) (interchain with G-Cter in SUMO2) cross-links involve residues K719 and K736. T741 carries the phosphothreonine modification. A phosphoserine mark is found at S747, S759, and S766. A compositionally biased stretch (basic and acidic residues) spans 767-780 (DENKDDYTIPDEYR). A Glycyl lysine isopeptide (Lys-Gly) (interchain with G-Cter in SUMO2) cross-link involves residue K770. The Matrin-type zinc-finger motif lies at 801 to 832 (FYCKLCSLFYTNEEVAKNTHCSSLPHYQKLKK). K836 carries the N6-acetyllysine; alternate modification. K836 is covalently cross-linked (Glycyl lysine isopeptide (Lys-Gly) (interchain with G-Cter in SUMO2); alternate).

Part of a complex consisting of SFPQ, NONO and MATR3. Interacts with AGO1 and AGO2. Part of a complex composed at least of ASH2L, EMSY, HCFC1, HSPA8, CCAR2, MATR3, MKI67, RBBP5, TUBB2A, WDR5 and ZNF335; this complex may have a histone H3-specific methyltransferase activity. Interacts with TARDBP. Part of the HDP-RNP complex composed of at least HEXIM1, PRKDC, XRCC5, XRCC6, paraspeckle proteins (SFPQ, NONO, PSPC1, RBM14, and MATR3) and NEAT1 RNA. Interacts with FUS. Interacts with IGF2BP1; the interaction is enhanced by SEPIN14P20 peptide RBPR. Interacts with IGF2BP2 and IGF2BP3. Interacts with RBPMS.

It localises to the nucleus matrix. In terms of biological role, may play a role in transcription or may interact with other nuclear matrix proteins to form the internal fibrogranular network. In association with the SFPQ-NONO heteromer may play a role in nuclear retention of defective RNAs. Plays a role in the regulation of DNA virus-mediated innate immune response by assembling into the HDP-RNP complex, a complex that serves as a platform for IRF3 phosphorylation and subsequent innate immune response activation through the cGAS-STING pathway. Binds to N6-methyladenosine (m6A)-containing mRNAs and contributes to MYC stability by binding to m6A-containing MYC mRNAs. May bind to specific miRNA hairpins. The chain is Matrin-3 (MATR3) from Homo sapiens (Human).